A 538-amino-acid chain; its full sequence is Bifunctional purine biosynthesis protein PurH (538 aa).

One can recognise an MGS-like domain in the interval 8 to 158 (IPAPDKVQVK…KNHAYVTTLT (151 aa)).

This sequence belongs to the PurH family.

It carries out the reaction (6R)-10-formyltetrahydrofolate + 5-amino-1-(5-phospho-beta-D-ribosyl)imidazole-4-carboxamide = 5-formamido-1-(5-phospho-D-ribosyl)imidazole-4-carboxamide + (6S)-5,6,7,8-tetrahydrofolate. The catalysed reaction is IMP + H2O = 5-formamido-1-(5-phospho-D-ribosyl)imidazole-4-carboxamide. It functions in the pathway purine metabolism; IMP biosynthesis via de novo pathway; 5-formamido-1-(5-phospho-D-ribosyl)imidazole-4-carboxamide from 5-amino-1-(5-phospho-D-ribosyl)imidazole-4-carboxamide (10-formyl THF route): step 1/1. Its pathway is purine metabolism; IMP biosynthesis via de novo pathway; IMP from 5-formamido-1-(5-phospho-D-ribosyl)imidazole-4-carboxamide: step 1/1. The protein is Bifunctional purine biosynthesis protein PurH of Rhizobium rhizogenes (strain K84 / ATCC BAA-868) (Agrobacterium radiobacter).